The following is a 579-amino-acid chain: Peptidoglycan D,D-transpeptidase FtsI (579 aa).

Residues 15 to 35 traverse the membrane as a helical segment; sequence FCVIVGLLLAMVGAIVWRIVD. Ser294 serves as the catalytic Acyl-ester intermediate. Positions 558–579 are disordered; it reads DNLPTATEQQQVNAAPAKGGRG. Residues 561–570 are compositionally biased toward polar residues; the sequence is PTATEQQQVN.

Belongs to the transpeptidase family. FtsI subfamily.

The protein resides in the cell inner membrane. It carries out the reaction Preferential cleavage: (Ac)2-L-Lys-D-Ala-|-D-Ala. Also transpeptidation of peptidyl-alanyl moieties that are N-acyl substituents of D-alanine.. The protein operates within cell wall biogenesis; peptidoglycan biosynthesis. Functionally, catalyzes cross-linking of the peptidoglycan cell wall at the division septum. Binds penicillin. This chain is Peptidoglycan D,D-transpeptidase FtsI, found in Pseudomonas aeruginosa (strain ATCC 15692 / DSM 22644 / CIP 104116 / JCM 14847 / LMG 12228 / 1C / PRS 101 / PAO1).